We begin with the raw amino-acid sequence, 512 residues long: Histidine ammonia-lyase (512 aa).

The 5-imidazolinone (Ala-Gly) cross-link spans 146 to 148 (ASG). The residue at position 147 (Ser-147) is a 2,3-didehydroalanine (Ser).

The protein belongs to the PAL/histidase family. In terms of processing, contains an active site 4-methylidene-imidazol-5-one (MIO), which is formed autocatalytically by cyclization and dehydration of residues Ala-Ser-Gly.

It localises to the cytoplasm. It carries out the reaction L-histidine = trans-urocanate + NH4(+). The protein operates within amino-acid degradation; L-histidine degradation into L-glutamate; N-formimidoyl-L-glutamate from L-histidine: step 1/3. The polypeptide is Histidine ammonia-lyase (Paracidovorax citrulli (strain AAC00-1) (Acidovorax citrulli)).